The following is a 196-amino-acid chain: Holliday junction branch migration complex subunit RuvA (196 aa).

The interval 1-63 is domain I; the sequence is MYDYIKGKLS…DDAHLLFGFH (63 aa). Residues 64–142 are domain II; that stretch reads TENEKEIFLN…EASGESATSR (79 aa). Positions 143 to 148 are flexible linker; the sequence is KVSSEQ. The interval 148 to 196 is domain III; that stretch reads QNSNLEEAMEALLALGYKATELKKVKAFFEGTNETVEQYIKSSLKMLMK.

This sequence belongs to the RuvA family. As to quaternary structure, homotetramer. Forms an RuvA(8)-RuvB(12)-Holliday junction (HJ) complex. HJ DNA is sandwiched between 2 RuvA tetramers; dsDNA enters through RuvA and exits via RuvB. An RuvB hexamer assembles on each DNA strand where it exits the tetramer. Each RuvB hexamer is contacted by two RuvA subunits (via domain III) on 2 adjacent RuvB subunits; this complex drives branch migration. In the full resolvosome a probable DNA-RuvA(4)-RuvB(12)-RuvC(2) complex forms which resolves the HJ.

It localises to the cytoplasm. The RuvA-RuvB-RuvC complex processes Holliday junction (HJ) DNA during genetic recombination and DNA repair, while the RuvA-RuvB complex plays an important role in the rescue of blocked DNA replication forks via replication fork reversal (RFR). RuvA specifically binds to HJ cruciform DNA, conferring on it an open structure. The RuvB hexamer acts as an ATP-dependent pump, pulling dsDNA into and through the RuvAB complex. HJ branch migration allows RuvC to scan DNA until it finds its consensus sequence, where it cleaves and resolves the cruciform DNA. The chain is Holliday junction branch migration complex subunit RuvA from Streptococcus agalactiae serotype Ia (strain ATCC 27591 / A909 / CDC SS700).